The primary structure comprises 113 residues: U11-theraphotoxin-Hhn1a (113 aa).

The signal sequence occupies residues Met1 to Ala21. A propeptide spanning residues Asp22 to Arg74 is cleaved from the precursor. Residues Leu60–Asn69 are compositionally biased toward basic and acidic residues. The segment at Leu60–Cys82 is disordered. 3 disulfides stabilise this stretch: Cys75/Cys90, Cys82/Cys95, and Cys89/Cys110.

It belongs to the neurotoxin 14 (magi-1) family. 01 (HNTX-16) subfamily. Expressed by the venom gland.

The protein localises to the secreted. Its function is as follows. Probable ion channel inhibitor. The protein is U11-theraphotoxin-Hhn1a of Cyriopagopus hainanus (Chinese bird spider).